We begin with the raw amino-acid sequence, 92 residues long: MKKKKVEIIMGKKKLQILKGSVIKNKMQKSIVVSVERFVKHPIYKKFMKKTTKLHVHDENNSSKVGDVVEIQECRPISKTKSWKLINIKKNN.

This sequence belongs to the universal ribosomal protein uS17 family. In terms of assembly, part of the 30S ribosomal subunit.

In terms of biological role, one of the primary rRNA binding proteins, it binds specifically to the 5'-end of 16S ribosomal RNA. In Wigglesworthia glossinidia brevipalpis, this protein is Small ribosomal subunit protein uS17.